The following is a 602-amino-acid chain: MIRQCLSRRAAYPCYRIVAGGTEPTGCLYPQSCRISRRGRDWSSTSRRAIDTQTSGASNGADYVPLRQQLKEQARAKRAAKRKGEVSPPEHEDWELTVGIEIHAQLDTDTKLFSRASAAIDDVPNSNVALFDVALPGSQPLFQPATLIPALRAAIALNCDVQRVSRFDRKHYFYQDQPAGYQITQYYEPYAKNGSIWLGSHDGIAKEDGVGVEIGIKQIQMEQDTAKSQELPSSTYLLDFNRVSRPLIEIITLPQIHSPATAAACVRKIQTILQSVGAVTTGMEMGGLRADVNVSVRKRSEGVGDHQYHGVTGLGQRTEIKNLSSFKAVEDAIIAERDRQIAVLRAGGAIEGETRGWTLGSTETRKLRGKEGEVDYRYMPDPDLGPVIIGYDVLCELKAKLPVLPDALLHNLVQDPKYGLSIDDAKTLIELDDGDRLDYYKDAVDILVTLQKDLSDDFSGGKVVGNWVLHELGGLLTKSNLHWDSERVPAQSLAEIINLLSRNKITGSTAKSLFAMVFDGDKRSIGQIVEDENLLLQSLSREEYIALAEEVMRQNPKMVMEICEKRQLGKIGWLVGQIKRIGDRNRVEAQKAEEILRELILK.

Belongs to the GatB/GatE family. GatB subfamily. In terms of assembly, subunit of the heterotrimeric GatCAB amidotransferase (AdT) complex, composed of A, B and C subunits.

It localises to the mitochondrion. The catalysed reaction is L-glutamyl-tRNA(Gln) + L-glutamine + ATP + H2O = L-glutaminyl-tRNA(Gln) + L-glutamate + ADP + phosphate + H(+). In terms of biological role, allows the formation of correctly charged Gln-tRNA(Gln) through the transamidation of misacylated Glu-tRNA(Gln) in the mitochondria. The reaction takes place in the presence of glutamine and ATP through an activated gamma-phospho-Glu-tRNA(Gln). The protein is Glutamyl-tRNA(Gln) amidotransferase subunit B, mitochondrial of Paracoccidioides lutzii (strain ATCC MYA-826 / Pb01) (Paracoccidioides brasiliensis).